The primary structure comprises 131 residues: Small ribosomal subunit protein uS8 (131 aa).

The protein belongs to the universal ribosomal protein uS8 family. Part of the 30S ribosomal subunit. Contacts proteins S5 and S12.

Functionally, one of the primary rRNA binding proteins, it binds directly to 16S rRNA central domain where it helps coordinate assembly of the platform of the 30S subunit. This is Small ribosomal subunit protein uS8 from Chlorobium luteolum (strain DSM 273 / BCRC 81028 / 2530) (Pelodictyon luteolum).